We begin with the raw amino-acid sequence, 905 residues long: Heme/hemopexin-binding protein (905 aa).

The signal sequence occupies residues 1–21 (MYKLNVISLIILTTYTGATYA).

It is found in the secreted. Binds heme/hemopexin complexes. The chain is Heme/hemopexin-binding protein (hxuA) from Haemophilus influenzae (strain ATCC 51907 / DSM 11121 / KW20 / Rd).